We begin with the raw amino-acid sequence, 275 residues long: NH(3)-dependent NAD(+) synthetase (275 aa).

47 to 54 (GISGGQDS) is an ATP binding site. D53 is a Mg(2+) binding site. A deamido-NAD(+)-binding site is contributed by R141. T161 provides a ligand contact to ATP. E166 provides a ligand contact to Mg(2+). Positions 174 and 181 each coordinate deamido-NAD(+). ATP is bound by residues K190 and T212. 261–262 (HK) contributes to the deamido-NAD(+) binding site.

Belongs to the NAD synthetase family. Homodimer.

It carries out the reaction deamido-NAD(+) + NH4(+) + ATP = AMP + diphosphate + NAD(+) + H(+). The protein operates within cofactor biosynthesis; NAD(+) biosynthesis; NAD(+) from deamido-NAD(+) (ammonia route): step 1/1. Catalyzes the ATP-dependent amidation of deamido-NAD to form NAD. Uses ammonia as a nitrogen source. The protein is NH(3)-dependent NAD(+) synthetase of Lacticaseibacillus paracasei (strain ATCC 334 / BCRC 17002 / CCUG 31169 / CIP 107868 / KCTC 3260 / NRRL B-441) (Lactobacillus paracasei).